Reading from the N-terminus, the 275-residue chain is F-box only protein 50 (275 aa).

Positions 1–67 are disordered; sequence MEEVREGHAL…LPEPAQPSEA (67 aa). Over residues 26-62 the composition is skewed to pro residues; the sequence is PPSPRSPSPPPSPPPLPSPPSLPSPAAPEAPELPEPA. 3 positions are modified to phosphoserine: Ser-31, Ser-37, and Ser-49. Residues 95-273 enclose the FBA domain; that stretch reads LLLRRPLYRN…VTDSSVSVQL (179 aa).

As to expression, expressed in the esophagus, oral cavity, skin, tongue and reproductive organs.

It is found in the cytoplasm. Its function is as follows. Promotes cell proliferation. The chain is F-box only protein 50 (NCCRP1) from Homo sapiens (Human).